The following is a 180-amino-acid chain: Secreted RxLR effector protein 19 (180 aa).

The first 19 residues, 1 to 19 (MKLLLRALATFVLLNGVDS), serve as a signal peptide directing secretion. One can recognise a Jacalin-type lectin domain in the interval 25 to 171 (FQKCNVTGGP…IFALGALWGP (147 aa)). Residues 52–77 (RALRLCGVDFVDGIGVTIWDLSVEEN) carry the RxLR-dEER motif.

It belongs to the RxLR effector family.

The protein resides in the secreted. It localises to the host cytoplasm. It is found in the host nucleus. In terms of biological role, effector that partially suppresses the tobacco programmed cell death induced by cell death-inducing proteins. This chain is Secreted RxLR effector protein 19, found in Plasmopara viticola (Downy mildew of grapevine).